Here is a 569-residue protein sequence, read N- to C-terminus: Glutamate--tRNA ligase (569 aa).

The 'HIGH' region signature appears at 108-118 (PNPDFVLHLGS).

This sequence belongs to the class-I aminoacyl-tRNA synthetase family. Glutamate--tRNA ligase type 2 subfamily.

The protein localises to the cytoplasm. The enzyme catalyses tRNA(Glu) + L-glutamate + ATP = L-glutamyl-tRNA(Glu) + AMP + diphosphate. Functionally, catalyzes the attachment of glutamate to tRNA(Glu) in a two-step reaction: glutamate is first activated by ATP to form Glu-AMP and then transferred to the acceptor end of tRNA(Glu). In Thermofilum pendens (strain DSM 2475 / Hrk 5), this protein is Glutamate--tRNA ligase.